The primary structure comprises 265 residues: Phosphate import ATP-binding protein PstB (265 aa).

The ABC transporter domain occupies 11 to 260; that stretch reads VSADEVKIAA…PRDPRTESYI (250 aa). 50–57 contacts ATP; it reads GPSGCGKS.

This sequence belongs to the ABC transporter superfamily. Phosphate importer (TC 3.A.1.7) family. In terms of assembly, the complex is composed of two ATP-binding proteins (PstB), two transmembrane proteins (PstC and PstA) and a solute-binding protein (PstS).

Its subcellular location is the cell inner membrane. The catalysed reaction is phosphate(out) + ATP + H2O = ADP + 2 phosphate(in) + H(+). In terms of biological role, part of the ABC transporter complex PstSACB involved in phosphate import. Responsible for energy coupling to the transport system. This is Phosphate import ATP-binding protein PstB from Cereibacter sphaeroides (strain ATCC 17023 / DSM 158 / JCM 6121 / CCUG 31486 / LMG 2827 / NBRC 12203 / NCIMB 8253 / ATH 2.4.1.) (Rhodobacter sphaeroides).